Reading from the N-terminus, the 1105-residue chain is DNA polymerase delta catalytic subunit (1105 aa).

Residues 1–46 (MSSGGRGGKRRGAPPPGPSGAAAKRAHPGGTPQPPPPAATAAAPVA) are disordered. Positions 1015, 1018, 1030, and 1033 each coordinate Zn(2+). A CysA-type zinc finger spans residues 1015 to 1033 (CLGCKAVISGSNQTLCFHC). [4Fe-4S] cluster contacts are provided by Cys-1062, Cys-1065, Cys-1075, and Cys-1080. Positions 1062–1080 (CQECQGSLHQDVLCTSRDC) match the CysB motif motif.

This sequence belongs to the DNA polymerase type-B family. As to quaternary structure, heterodimer with subunits of 125 kDa and 50 kDa. The 125 kDa subunit contains the polymerase active site and most likely the active site for the 3'-5' exonuclease activity. Requires [4Fe-4S] cluster as cofactor.

It localises to the nucleus. The catalysed reaction is DNA(n) + a 2'-deoxyribonucleoside 5'-triphosphate = DNA(n+1) + diphosphate. In terms of biological role, this polymerase possesses two enzymatic activities: DNA synthesis (polymerase) and an exonucleolytic activity that degrades single-stranded DNA in the 3'- to 5'-direction. The sequence is that of DNA polymerase delta catalytic subunit (POLD1) from Oryza sativa subsp. japonica (Rice).